An 86-amino-acid chain; its full sequence is Neurotoxin 3FTx-8a (86 aa).

Residues 1–21 (MKTLLLTLVVVTIVCLDLGYT) form the signal peptide. 5 disulfide bridges follow: Cys24–Cys45, Cys27–Cys32, Cys38–Cys63, Cys67–Cys78, and Cys79–Cys84.

In terms of tissue distribution, expressed by the venom gland.

It is found in the secreted. Its function is as follows. Binds with low affinity to muscular (alpha-1-beta-1-delta-epsilon/CHRNA1-CHRNB1-CHRND-CHRNE) and very low affinity to neuronal (alpha-7/CHRNA7) nicotinic acetylcholine receptor (nAChR). This is Neurotoxin 3FTx-8a from Bungarus fasciatus (Banded krait).